A 324-amino-acid chain; its full sequence is Aldo-keto reductase family 1 member C15 (324 aa).

Residues 24–26 and aspartate 51 contribute to the NADP(+) site; that span reads TFA. Catalysis depends on tyrosine 56, which acts as the Proton donor. Histidine 118 contacts substrate. NADP(+)-binding positions include 167–168, glutamine 191, 217–225, and 269–281; these read SN, YSALGSHRD, and LAKS…IKEN.

The protein belongs to the aldo/keto reductase family. As to quaternary structure, monomer. In terms of tissue distribution, expressed in lung, specifically in bronchiolar club cells, type II alveolar cells and epithelial cells of the duct of the bronchial gland (at protein level). Expressed in gastric parietal cells and in epithelial cells of the large intestine and colon (at protein level). Expressed in brown adipocytes (at protein level). Expressed in vascular endothelial cells (at protein level).

The protein localises to the cytoplasm. The enzyme catalyses (2E,6E)-farnesol + NADP(+) = (2E,6E)-farnesal + NADPH + H(+). With respect to regulation, the dehydrogenase activity is inhibited by 3',3'',5',5''-tetraiodophenolphthalein, phenolphthalein, genistein, quercetin, zearalenone and diethylstilbestrol. Catalyzes the NADPH-dependent reduction of a variety of substrates including aromatic and aliphatic aldehydes, quinones, ketones, dicarbonyl compounds and 17-ketosteroids. Catalyzes the NADP(+)-dependent oxidation of aromatic, alicyclic and aliphatic alcohols, and 17beta-hydroxysteroids. To a lesser extent, can also catalyze the reduction of some aldoses and ketoses and the oxidation of some sugar alcohols. In the stomach, lung and colon tissues, mediates the reduction of farnesal and geranylgeranial into farnesol and geranylgeraniol respectively. By reducing 4-hydroxy-2-nonenal (HNE), produced during lipid peroxidation, into 1,4-dihydro-2-nonene (DHN), protects vascular endothelial cells from damage elicited by oxidized lipoproteins. The chain is Aldo-keto reductase family 1 member C15 from Rattus norvegicus (Rat).